A 587-amino-acid chain; its full sequence is Protein SIX6OS1 (587 aa).

The disordered stretch occupies residues 356 to 378; it reads TPQKQSNSNQWSEKGDKDAEYGD. Positions 357-367 are enriched in polar residues; sequence PQKQSNSNQWS. Residues 368–378 are compositionally biased toward basic and acidic residues; the sequence is EKGDKDAEYGD. The residue at position 439 (serine 439) is a Phosphoserine. Residues 568-587 are disordered; that stretch reads SSSLKGFSSSSQNTTQFTFF.

As to quaternary structure, interacts with SYCE1. Interacts with proteasome subunit PSMA8; to participate in meiosis progression during spermatogenesis. Highest expression in retina, skeletal muscle, testis and colon.

It localises to the chromosome. Its function is as follows. Meiotic protein that localizes to the central element of the synaptonemal complex and is required for chromosome synapsis during meiotic recombination. Required for the appropriate processing of intermediate recombination nodules before crossover formation. The protein is Protein SIX6OS1 of Homo sapiens (Human).